Here is a 148-residue protein sequence, read N- to C-terminus: Nucleoside diphosphate kinase A (148 aa).

6 residues coordinate ATP: Lys9, Phe57, Arg85, Thr91, Arg102, and Asn112. His115 (pros-phosphohistidine intermediate) is an active-site residue.

This sequence belongs to the NDK family. Requires Mg(2+) as cofactor.

The enzyme catalyses a 2'-deoxyribonucleoside 5'-diphosphate + ATP = a 2'-deoxyribonucleoside 5'-triphosphate + ADP. It catalyses the reaction a ribonucleoside 5'-diphosphate + ATP = a ribonucleoside 5'-triphosphate + ADP. In terms of biological role, major role in the synthesis of nucleoside triphosphates other than ATP. The ATP gamma phosphate is transferred to the NDP beta phosphate via a ping-pong mechanism, using a phosphorylated active-site intermediate. This is Nucleoside diphosphate kinase A from Flaveria bidentis (Coastal plain yellowtops).